The primary structure comprises 390 residues: 1-acyl-sn-glycerol-3-phosphate acyltransferase 2 (390 aa).

The helical transmembrane segment at 2–22 (AMAAAVIVPLGILFFISGLVV) threads the bilayer. Residues 91 to 96 (HRSDID) carry the HXXXXD motif motif. A run of 2 helical transmembrane segments spans residues 305 to 325 (LAVV…FLHW) and 333 to 353 (KGIA…QILI). A disordered region spans residues 358-390 (SERSTPAKVAPAKPKDNHQSGPSSQTEVEEKQK).

This sequence belongs to the 1-acyl-sn-glycerol-3-phosphate acyltransferase family.

Its subcellular location is the endoplasmic reticulum membrane. The enzyme catalyses a 1-acyl-sn-glycero-3-phosphate + an acyl-CoA = a 1,2-diacyl-sn-glycero-3-phosphate + CoA. It functions in the pathway phospholipid metabolism; CDP-diacylglycerol biosynthesis; CDP-diacylglycerol from sn-glycerol 3-phosphate: step 2/3. Functionally, converts lysophosphatidic acid (LPA) into phosphatidic acid by incorporating acyl moiety at the 2 position. The protein is 1-acyl-sn-glycerol-3-phosphate acyltransferase 2 (LPAT2) of Brassica napus (Rape).